The sequence spans 318 residues: Pheromone-regulated membrane protein 5 (318 aa).

The chain crosses the membrane as a helical span at residues 78–98; the sequence is FIXVGGIAGVIFLAILLWWVI. Phosphoserine is present on S129. The span at 238 to 247 shows a compositional bias: low complexity; the sequence is TISSSSASSL. Positions 238 to 318 are disordered; sequence TISSSSASSL…HMLEGKEQDE (81 aa). The segment covering 250–261 has biased composition (basic and acidic residues); the sequence is GNEKEVGEDIRK. Polar residues predominate over residues 276–285; sequence SPESDGSVNR. S279, S282, and S288 each carry phosphoserine. Residues 309–318 are compositionally biased toward basic and acidic residues; sequence HMLEGKEQDE. A Glycyl lysine isopeptide (Lys-Gly) (interchain with G-Cter in ubiquitin) cross-link involves residue K314.

Belongs to the PRM5 family.

The protein localises to the membrane. This Saccharomyces cerevisiae (strain FostersO) (Baker's yeast) protein is Pheromone-regulated membrane protein 5 (PRM5).